The sequence spans 275 residues: Large ribosomal subunit protein uL2 (275 aa).

Positions 38–53 are enriched in polar residues; sequence SSKAGRNNNGRITTRH. Disordered regions lie at residues 38–59 and 224–257; these read SSKAGRNNNGRITTRHQGGGHK and AMNPIDHPHGGGEGRTAAGRDPVSPWGTPTKGFR.

This sequence belongs to the universal ribosomal protein uL2 family. As to quaternary structure, part of the 50S ribosomal subunit. Forms a bridge to the 30S subunit in the 70S ribosome.

Functionally, one of the primary rRNA binding proteins. Required for association of the 30S and 50S subunits to form the 70S ribosome, for tRNA binding and peptide bond formation. It has been suggested to have peptidyltransferase activity; this is somewhat controversial. Makes several contacts with the 16S rRNA in the 70S ribosome. The chain is Large ribosomal subunit protein uL2 from Burkholderia multivorans (strain ATCC 17616 / 249).